The chain runs to 343 residues: Holliday junction branch migration complex subunit RuvB (343 aa).

Positions 1–20 (MEEMASRMISGDPELGEPFQ) are disordered. The large ATPase domain (RuvB-L) stretch occupies residues 1-185 (MEEMASRMIS…FGILARMQFY (185 aa)). ATP-binding positions include L24, R25, G66, K69, T70, T71, 132 to 134 (EDF), R175, Y185, and R222. Position 70 (T70) interacts with Mg(2+). The segment at 186-256 (EPDELQQIVT…LADRALLALE (71 aa)) is small ATPAse domain (RuvB-S). Residues 259-343 (RNGLDNMDHR…PRPVQQGTLL (85 aa)) form a head domain (RuvB-H) region. DNA-binding residues include R295, R314, and R319.

It belongs to the RuvB family. In terms of assembly, homohexamer. Forms an RuvA(8)-RuvB(12)-Holliday junction (HJ) complex. HJ DNA is sandwiched between 2 RuvA tetramers; dsDNA enters through RuvA and exits via RuvB. An RuvB hexamer assembles on each DNA strand where it exits the tetramer. Each RuvB hexamer is contacted by two RuvA subunits (via domain III) on 2 adjacent RuvB subunits; this complex drives branch migration. In the full resolvosome a probable DNA-RuvA(4)-RuvB(12)-RuvC(2) complex forms which resolves the HJ.

It is found in the cytoplasm. The catalysed reaction is ATP + H2O = ADP + phosphate + H(+). The RuvA-RuvB-RuvC complex processes Holliday junction (HJ) DNA during genetic recombination and DNA repair, while the RuvA-RuvB complex plays an important role in the rescue of blocked DNA replication forks via replication fork reversal (RFR). RuvA specifically binds to HJ cruciform DNA, conferring on it an open structure. The RuvB hexamer acts as an ATP-dependent pump, pulling dsDNA into and through the RuvAB complex. RuvB forms 2 homohexamers on either side of HJ DNA bound by 1 or 2 RuvA tetramers; 4 subunits per hexamer contact DNA at a time. Coordinated motions by a converter formed by DNA-disengaged RuvB subunits stimulates ATP hydrolysis and nucleotide exchange. Immobilization of the converter enables RuvB to convert the ATP-contained energy into a lever motion, pulling 2 nucleotides of DNA out of the RuvA tetramer per ATP hydrolyzed, thus driving DNA branch migration. The RuvB motors rotate together with the DNA substrate, which together with the progressing nucleotide cycle form the mechanistic basis for DNA recombination by continuous HJ branch migration. Branch migration allows RuvC to scan DNA until it finds its consensus sequence, where it cleaves and resolves cruciform DNA. The chain is Holliday junction branch migration complex subunit RuvB from Magnetococcus marinus (strain ATCC BAA-1437 / JCM 17883 / MC-1).